The sequence spans 199 residues: Charged multivesicular body protein 1b (199 aa).

2 coiled-coil regions span residues 8 to 42 (LFNLKFAAKELNRNAKKCEKEEKTEKAKIKKAIQK) and 178 to 199 (TSVASTEQDELSQRLARLRDQV). The tract at residues 167–199 (ELPQGQTGSVGTSVASTEQDELSQRLARLRDQV) is disordered. A compositionally biased stretch (polar residues) spans 170–183 (QGQTGSVGTSVAST). An MIT-interacting motif motif is present at residues 186–196 (DELSQRLARLR).

This sequence belongs to the SNF7 family. Probable peripherally associated component of the endosomal sorting required for transport complex III (ESCRT-III).

It localises to the cytoplasm. It is found in the cytosol. The protein resides in the endosome. Its subcellular location is the late endosome membrane. Probable peripherally associated component of the endosomal sorting required for transport complex III (ESCRT-III) which is involved in multivesicular bodies (MVBs) formation and sorting of endosomal cargo proteins into MVBs. MVBs contain intraluminal vesicles (ILVs) that are generated by invagination and scission from the limiting membrane of the endosome and mostly are delivered to lysosomes enabling degradation of membrane proteins, such as stimulated growth factor receptors, lysosomal enzymes and lipids. In Xenopus laevis (African clawed frog), this protein is Charged multivesicular body protein 1b (chmp1b).